We begin with the raw amino-acid sequence, 427 residues long: A-kinase anchor protein 5 (427 aa).

A disordered region spans residues 1–122 (METTISEIHV…DADLSKKKAK (122 aa)). Positions 1 to 170 (METTISEIHV…LDIQTQTPLN (170 aa)) are essential to the intracellular anchoring function. Residues 8-19 (IHVENKDEKRSA) show a composition bias toward basic and acidic residues. S22 bears the Phosphoserine mark. C36 carries the S-palmitoyl cysteine lipid modification. Residues 37 to 48 (FKRRKKAAKALK) show a composition bias toward basic residues. The AKAP CaM-binding signature appears at 76 to 96 (RGAWASLKRLVTRRKRSESSK). The segment covering 92-102 (SESSKQQKPLE) has biased composition (basic and acidic residues). Residue C129 is the site of S-palmitoyl cysteine attachment. Polar residues-rich tracts occupy residues 171–182 (DQATKAKSTQDL) and 242–252 (VQPQQASPLET). 3 disordered regions span residues 171 to 205 (DQATKAKSTQDLSEGISRKDGDEVCESNVSNSTTS), 239 to 269 (KQDVQPQQASPLETSETDHQQPVLSDVPPLP), and 281 to 333 (SNST…EESK). Residues 302–333 (EETKPKDTELSQESDFKENGITEEKSKSEESK) show a composition bias toward basic and acidic residues. The segment at 392-405 (LIETASSLVKNAIQ) is PKA-RII subunit binding domain. A tethers NFATC2 to CRAC channels region spans residues 410–427 (QLVNEMASDDNKINNLLQ).

As to quaternary structure, binding protein for dimer of the RII-beta regulatory subunit of cAMP-dependent protein kinase (PKA) and also for the protein kinase C (PKC) and the phosphatase calcineurin (PP2B). Each enzyme is inhibited when bound to the anchoring protein. Also binds the beta2-adrenergic receptor. Part of a complex containing AKAP5, ADCY5, ADCY6 and PDE4C. Interacts with ADCY8, and enhances its phosphorylation at lipid rafts. Interacts with ORAI1 (isoform alpha) (via N-terminus) upon store depletion and in response to LTC4. Does not interact with ORAI2 and ORAI3 paralogs. Interacts (via leucine zipper domain) with NFATC2/NFAT1. Interacts with calmodulin; the interaction is calcium-independent. Interacts with KCNQ2; the interaction may help KCNQ2 channel complex to retain calcium-bound calmodulin. Interacts with KCNK2; the channel is recruited to postsynaptic microdomains by AKAP5 where it can integrate neurotransmitter receptor signals. Part of a complex composed of AKAP5 and ADRB2. Post-translationally, palmitoylated. Palmitoylation at Cys-36 and Cys-129 play a key role in the targeting of AKAP5 to lipid rafts. Palmitoylation by ZDHHC2 is required for AKAP5 function in LTP-stimulated recycling endosome exocytosis. In terms of tissue distribution, predominantly in the cerebral cortex and the postsynaptic densities of the forebrain, and to a lesser extent in adrenal medulla, lung and anterior pituitary.

The protein localises to the postsynaptic recycling endosome membrane. Its subcellular location is the cell projection. The protein resides in the dendrite. It localises to the postsynaptic cell membrane. Its function is as follows. Multivalent scaffold protein that anchors the cAMP-dependent protein kinase/PKA to cytoskeletal and/or organelle-associated proteins, targeting the signal carried by cAMP to specific intracellular effectors. Association with the beta2-adrenergic receptor (beta2-AR) not only regulates beta2-AR signaling pathway, but also the activation by PKA by switching off the beta2-AR signaling cascade. Plays a role in long term synaptic potentiation by regulating protein trafficking from the dendritic recycling endosomes to the plasma membrane and controlling both structural and functional plasticity at excitatory synapses. In hippocampal pyramidal neurons, recruits KCNK2/TREK-1 channel at postsynaptic dense bodies microdomains and converts it to a leak channel no longer sensitive to stimulation by arachidonic acid, acidic pH or mechanical stress, nor inhibited by Gq-coupled receptors but still under the negative control of Gs-coupled receptors. Associates with ORAI1 pore-forming subunit of CRAC channels in Ca(2+) signaling microdomains where it recruits NFATC2/NFAT1 and couples store-operated Ca(2+) influx to calmodulin and calcineurin signaling and activation of NFAT-dependent transcriptional responses. The sequence is that of A-kinase anchor protein 5 (AKAP5) from Homo sapiens (Human).